The following is a 342-amino-acid chain: Cellular tumor antigen p53 (342 aa).

Positions 1–35 are transcription activation (acidic); the sequence is MEEADLTLPLSQDTFHDLWNNVFLSTENESLAPPE. Residues 68 to 255 mediate DNA binding; the sequence is NYAGEHGFNL…KTEEGNLEKS (188 aa). 4 residues coordinate Zn(2+): Cys-142, His-145, Cys-201, and Cys-205. Residues 236–243 are interaction with DNA; the sequence is RVCACPGR. The segment covering 244–256 has biased composition (basic and acidic residues); the sequence is DRKTEEGNLEKSG. The tract at residues 244–287 is disordered; sequence DRKTEEGNLEKSGTKQTKKRKSAPAPDTSTAKKSKSASSGEDED. The Bipartite nuclear localization signal signature appears at 261–278; it reads KKRKSAPAPDTSTAKKSK. The segment covering 271-282 has biased composition (low complexity); it reads TSTAKKSKSASS. Residues 288–317 form an oligomerization region; sequence KEIYTLSIRGRNRYLWFKSLNDGLELMDKT. A Nuclear export signal motif is present at residues 302 to 313; it reads LWFKSLNDGLEL. A disordered region spans residues 318–342; the sequence is GPKIKQEIPAPSSGKRLLKGGSDSD. The basic (repression of DNA-binding) stretch occupies residues 319–336; it reads PKIKQEIPAPSSGKRLLK.

Belongs to the p53 family. In terms of assembly, binds DNA as a homotetramer. The cofactor is Zn(2+).

Its subcellular location is the cytoplasm. The protein localises to the nucleus. Its function is as follows. Multifunctional transcription factor that induces cell cycle arrest, DNA repair or apoptosis upon binding to its target DNA sequence. Acts as a tumor suppressor in many tumor types; induces growth arrest or apoptosis depending on the physiological circumstances and cell type. Negatively regulates cell division by controlling expression of a set of genes required for this process. One of the activated genes is an inhibitor of cyclin-dependent kinases. Apoptosis induction seems to be mediated either by stimulation of BAX and FAS antigen expression, or by repression of Bcl-2 expression. The sequence is that of Cellular tumor antigen p53 (tp53) from Xiphophorus hellerii (Green swordtail).